The sequence spans 323 residues: Olfactory receptor 1E2 (323 aa).

Residues 1–25 lie on the Extracellular side of the membrane; it reads MMGQNQTSISDFLLLGLPIQPEQQN. Asparagine 5 is a glycosylation site (N-linked (GlcNAc...) asparagine). The helical transmembrane segment at 26–49 threads the bilayer; it reads LCYALFLAMYLTTLLGNLLIIVLI. Topologically, residues 50 to 57 are cytoplasmic; that stretch reads RLDSHLHT. A helical transmembrane segment spans residues 58–79; that stretch reads PVYLFLSNLSFSDLCFSSVTMP. Over 80 to 100 the chain is Extracellular; it reads KLLQNMQNQDPSIPYADCLTQ. Cysteine 97 and cysteine 198 are oxidised to a cystine. Residues 101–120 traverse the membrane as a helical segment; the sequence is MYFFLYFSDLESFLLVAMAY. The Cytoplasmic portion of the chain corresponds to 121 to 148; that stretch reads DRYVAICFPMHYTAICFLLHYTAIMSPM. The chain crosses the membrane as a helical span at residues 149–167; sequence LCLSVVALSWVLTTFHAML. Residues 168–205 lie on the Extracellular side of the membrane; that stretch reads HTLLMARLCFCADNVIPHFFCDMSALLKLACSDTRVNE. The helical transmembrane segment at 206-228 threads the bilayer; that stretch reads WVIFIMGGLILVIPFLLILGSYA. The Cytoplasmic portion of the chain corresponds to 229 to 245; that stretch reads RIVSSILKVPSSKGICK. A helical transmembrane segment spans residues 246–269; the sequence is AFSTCGSHLSVVSLFYGTVIGLYL. Residues 270–281 are Extracellular-facing; it reads CPSANSSTLKDT. An N-linked (GlcNAc...) asparagine glycan is attached at asparagine 274. The helical transmembrane segment at 282–301 threads the bilayer; that stretch reads VMAMMYTVVTPMLTPFIYSL. Residues 302 to 323 are Cytoplasmic-facing; the sequence is RNRDMKGALERVICKRKNPFLL.

The protein belongs to the G-protein coupled receptor 1 family.

The protein resides in the cell membrane. Its function is as follows. Odorant receptor. This Homo sapiens (Human) protein is Olfactory receptor 1E2 (OR1E2).